Here is a 322-residue protein sequence, read N- to C-terminus: MSGKPPAIFLMGPTAAGKTDLAIELTKVLPCELISVDSALVYRGMDIGSAKPSKEILAAHPHRLIDIRDPAESYSAAQFRADALEAMAEITARGKIPLLVGGTMLYYKALIDGLADMPADAAVRAELERQAEALGLAELHRQLAEVDPESAARIHPNDPQRLIRALEVYRVSGESMTAHRQRQFAESRGADAGAGGHLPYTVASLAIAPTDRHILHQRIALRFSQMLEQGFVDEVRSLRARSDLHAGLPSIRAVGYRQVWDYLDGKLTENEMRERGIIATRQLAKRQFTWLRGWPEVHWLDSLACDNLSRTLKYLGAISILS.

Residue 12–19 participates in ATP binding; that stretch reads GPTAAGKT. 14-19 is a substrate binding site; the sequence is TAAGKT. Interaction with substrate tRNA regions lie at residues 37–40 and 160–164; these read DSAL and QRLIR.

It belongs to the IPP transferase family. As to quaternary structure, monomer. The cofactor is Mg(2+).

The catalysed reaction is adenosine(37) in tRNA + dimethylallyl diphosphate = N(6)-dimethylallyladenosine(37) in tRNA + diphosphate. Catalyzes the transfer of a dimethylallyl group onto the adenine at position 37 in tRNAs that read codons beginning with uridine, leading to the formation of N6-(dimethylallyl)adenosine (i(6)A). This is tRNA dimethylallyltransferase from Pseudomonas putida (Arthrobacter siderocapsulatus).